A 189-amino-acid polypeptide reads, in one-letter code: Peptide deformylase (189 aa).

Fe cation contacts are provided by Cys98 and His140. Glu141 is an active-site residue. His144 lines the Fe cation pocket.

Belongs to the polypeptide deformylase family. It depends on Fe(2+) as a cofactor.

It catalyses the reaction N-terminal N-formyl-L-methionyl-[peptide] + H2O = N-terminal L-methionyl-[peptide] + formate. Its function is as follows. Removes the formyl group from the N-terminal Met of newly synthesized proteins. Requires at least a dipeptide for an efficient rate of reaction. N-terminal L-methionine is a prerequisite for activity but the enzyme has broad specificity at other positions. This is Peptide deformylase from Porphyromonas gingivalis (strain ATCC 33277 / DSM 20709 / CIP 103683 / JCM 12257 / NCTC 11834 / 2561).